A 330-amino-acid polypeptide reads, in one-letter code: Putative protein N-methyltransferase FAM86B2 (330 aa).

At M1 the chain carries N-acetylmethionine. S-adenosyl-L-methionine contacts are provided by residues W139, 165 to 167, W228, and A247; that span reads GSG.

It belongs to the class I-like SAM-binding methyltransferase superfamily. EEF2KMT family. As to quaternary structure, interacts with EEF2KMT.

The chain is Putative protein N-methyltransferase FAM86B2 (FAM86B2) from Homo sapiens (Human).